Reading from the N-terminus, the 104-residue chain is Iron-sulfur cluster assembly protein CyaY (104 aa).

The protein belongs to the frataxin family.

Involved in iron-sulfur (Fe-S) cluster assembly. May act as a regulator of Fe-S biogenesis. The protein is Iron-sulfur cluster assembly protein CyaY of Aliivibrio salmonicida (strain LFI1238) (Vibrio salmonicida (strain LFI1238)).